The following is a 257-amino-acid chain: Probable transcriptional regulatory protein SRU_2667 (257 aa).

Positions 1 to 15 (MAGHTRKWAKVKRKK) are enriched in basic residues. Residues 1–25 (MAGHTRKWAKVKRKKQKDDRRKSKV) are disordered.

Belongs to the TACO1 family.

It localises to the cytoplasm. The polypeptide is Probable transcriptional regulatory protein SRU_2667 (Salinibacter ruber (strain DSM 13855 / M31)).